Consider the following 79-residue polypeptide: Cell division protein ZapB (79 aa).

Positions 4–78 (EVFEKLESKV…LRALLGKMEE (75 aa)) form a coiled coil.

This sequence belongs to the ZapB family. Homodimer. The ends of the coiled-coil dimer bind to each other, forming polymers. Interacts with FtsZ.

It localises to the cytoplasm. Functionally, non-essential, abundant cell division factor that is required for proper Z-ring formation. It is recruited early to the divisome by direct interaction with FtsZ, stimulating Z-ring assembly and thereby promoting cell division earlier in the cell cycle. Its recruitment to the Z-ring requires functional FtsA or ZipA. This Serratia proteamaculans (strain 568) protein is Cell division protein ZapB.